Reading from the N-terminus, the 152-residue chain is Transcriptional regulator MraZ (152 aa).

SpoVT-AbrB domains follow at residues 5 to 52 (ATLV…PLPE) and 81 to 124 (ASEC…DETT).

It belongs to the MraZ family. Forms oligomers.

The protein resides in the cytoplasm. The protein localises to the nucleoid. Its function is as follows. Negatively regulates its own expression and that of the subsequent genes in the proximal part of the division and cell wall (dcw) gene cluster. Acts by binding directly to DNA. May also regulate the expression of genes outside the dcw cluster. The chain is Transcriptional regulator MraZ from Shigella flexneri serotype 5b (strain 8401).